We begin with the raw amino-acid sequence, 335 residues long: DDRGK domain-containing protein 1 (335 aa).

Residues 1 to 6 are Lumenal-facing; the sequence is MGDTYS. Residues 7 to 27 form a helical membrane-spanning segment; sequence LVLVAGYLSIFLFIGAIGYFY. Residues 28–335 lie on the Cytoplasmic side of the membrane; it reads LSKPRIPSSN…NNDQDPVDTN (308 aa). The tract at residues 37 to 124 is disordered; it reads NVNEQQQQQQ…GEDIGVVAPG (88 aa). Composition is skewed to low complexity over residues 41–56 and 91–103; these read QQQQQQQQQQQQQQPQ and SSGSDSDNSTNSD. Over residues 104–117 the composition is skewed to acidic residues; it reads NYDDDNGQEGEGED.

This sequence belongs to the DDRGK1 family.

It is found in the endoplasmic reticulum membrane. Its function is as follows. Substrate adapter for ufmylation, the covalent attachment of the ubiquitin-like modifier UFM1 to substrate proteins. In Dictyostelium discoideum (Social amoeba), this protein is DDRGK domain-containing protein 1.